The chain runs to 122 residues: Large ribosomal subunit protein uL14 (122 aa).

Belongs to the universal ribosomal protein uL14 family. In terms of assembly, part of the 50S ribosomal subunit. Forms a cluster with proteins L3 and L19. In the 70S ribosome, L14 and L19 interact and together make contacts with the 16S rRNA in bridges B5 and B8.

Functionally, binds to 23S rRNA. Forms part of two intersubunit bridges in the 70S ribosome. This is Large ribosomal subunit protein uL14 from Clostridium kluyveri (strain ATCC 8527 / DSM 555 / NBRC 12016 / NCIMB 10680 / K1).